Here is a 678-residue protein sequence, read N- to C-terminus: Probable metal-nicotianamine transporter YSL6 (678 aa).

A run of 14 helical transmembrane segments spans residues 41 to 61 (VTVR…LITH), 65 to 85 (LTVG…YFLV), 113 to 133 (CVVA…MLAM), 158 to 178 (LGWM…SLVA), 226 to 246 (ISFF…SCGF), 279 to 299 (IVNC…WPYI), 324 to 344 (VFIS…KIIY), 394 to 414 (LAGS…PMIF), 419 to 439 (WYLV…NSYG), 467 to 487 (GGVI…STAA), 512 to 532 (IGTT…WTAF), 561 to 581 (SALP…AILI), 606 to 626 (FYIG…LFVW), and 641 to 661 (IASG…ILSI).

The protein belongs to the YSL (TC 2.A.67.2) family. Expressed in roots and leaves.

The protein localises to the membrane. In terms of biological role, may be involved in the transport of nicotianamine-chelated metals. This Oryza sativa subsp. japonica (Rice) protein is Probable metal-nicotianamine transporter YSL6 (YSL6).